The sequence spans 504 residues: uncharacterized protein (504 aa).

To M.thermoautotrophicum MTH1137.

This is an uncharacterized protein from Methanocaldococcus jannaschii (strain ATCC 43067 / DSM 2661 / JAL-1 / JCM 10045 / NBRC 100440) (Methanococcus jannaschii).